The sequence spans 490 residues: Capsid protein (490 aa).

Residues 79–143 (GETSEEESDS…TQPKTIPGQK (65 aa)) form a disordered region. The segment covering 81–94 (TSEEESDSGEEPEF) has biased composition (acidic residues). Residues 95-111 (EQVRMDRTGGTEIPKEE) are compositionally biased toward basic and acidic residues. A Nuclear localization signal motif is present at residues 122–125 (RKRK). The CCHC-type zinc finger occupies 411–428 (CRCWICNIEGHYANECPN). The segment at 464–490 (YKEEEEETSTEEDDGSSTSEDSDSESD) is disordered. The span at 465–490 (KEEEEETSTEEDDGSSTSEDSDSESD) shows a compositional bias: acidic residues.

It belongs to the caulimoviridae capsid protein family. Interacts (via nuclear localization signal) with host importin alpha.

It localises to the virion. It is found in the host nucleus. In terms of biological role, self assembles to form an icosahedral capsid, about 50 nm in diameter, nm, composed of 420 subunits of the viral capsid protein. The capsid encapsulates the genomic dsDNA. Following virus entry into host cell, provides nuclear import of the viral genome. Virus particles do not enter the nucleus, but dock at the nuclear membrane through the interaction with host importins. The chain is Capsid protein from Arabidopsis thaliana (Mouse-ear cress).